Consider the following 145-residue polypeptide: D-aminoacyl-tRNA deacylase (145 aa).

The Gly-cisPro motif, important for rejection of L-amino acids motif lies at 137 to 138 (GP).

The protein belongs to the DTD family. In terms of assembly, homodimer.

It is found in the cytoplasm. The catalysed reaction is glycyl-tRNA(Ala) + H2O = tRNA(Ala) + glycine + H(+). The enzyme catalyses a D-aminoacyl-tRNA + H2O = a tRNA + a D-alpha-amino acid + H(+). Functionally, an aminoacyl-tRNA editing enzyme that deacylates mischarged D-aminoacyl-tRNAs. Also deacylates mischarged glycyl-tRNA(Ala), protecting cells against glycine mischarging by AlaRS. Acts via tRNA-based rather than protein-based catalysis; rejects L-amino acids rather than detecting D-amino acids in the active site. By recycling D-aminoacyl-tRNA to D-amino acids and free tRNA molecules, this enzyme counteracts the toxicity associated with the formation of D-aminoacyl-tRNA entities in vivo and helps enforce protein L-homochirality. This is D-aminoacyl-tRNA deacylase from Yersinia pestis bv. Antiqua (strain Antiqua).